A 252-amino-acid polypeptide reads, in one-letter code: Nuclease C1 (252 aa).

The active-site Proton acceptor is the H87. N119 serves as a coordination point for Mg(2+).

This sequence belongs to the DNA/RNA non-specific endonuclease family. It depends on Mg(2+) as a cofactor. Requires Mn(2+) as cofactor.

The protein resides in the secreted. Its function is as follows. This enzyme has both RNase and DNase activity. This is Nuclease C1 (NUC1CE) from Cunninghamella echinulata var. echinulata.